Reading from the N-terminus, the 210-residue chain is Holliday junction resolvase RecU (210 aa).

The interval 1–34 is disordered; that stretch reads MAFHYPNGQPYSNHETKQPKKQGRHTSPTTLYGK. Residues Thr-90, Asp-92, Glu-105, and Gln-124 each contribute to the Mg(2+) site.

This sequence belongs to the RecU family. Mg(2+) is required as a cofactor.

The protein localises to the cytoplasm. It carries out the reaction Endonucleolytic cleavage at a junction such as a reciprocal single-stranded crossover between two homologous DNA duplexes (Holliday junction).. Endonuclease that resolves Holliday junction intermediates in genetic recombination. Cleaves mobile four-strand junctions by introducing symmetrical nicks in paired strands. Promotes annealing of linear ssDNA with homologous dsDNA. Required for DNA repair, homologous recombination and chromosome segregation. The sequence is that of Holliday junction resolvase RecU from Latilactobacillus sakei subsp. sakei (strain 23K) (Lactobacillus sakei subsp. sakei).